A 335-amino-acid chain; its full sequence is tRNA-dihydrouridine(20/20a) synthase (335 aa).

FMN is bound by residues 20–22 (PML) and glutamine 72. Cysteine 102 serves as the catalytic Proton donor. FMN contacts are provided by residues lysine 141, histidine 173, 213–215 (NGG), and 235–236 (GR).

The protein belongs to the Dus family. DusA subfamily. Requires FMN as cofactor.

It catalyses the reaction 5,6-dihydrouridine(20) in tRNA + NADP(+) = uridine(20) in tRNA + NADPH + H(+). The enzyme catalyses 5,6-dihydrouridine(20) in tRNA + NAD(+) = uridine(20) in tRNA + NADH + H(+). It carries out the reaction 5,6-dihydrouridine(20a) in tRNA + NADP(+) = uridine(20a) in tRNA + NADPH + H(+). The catalysed reaction is 5,6-dihydrouridine(20a) in tRNA + NAD(+) = uridine(20a) in tRNA + NADH + H(+). Functionally, catalyzes the synthesis of 5,6-dihydrouridine (D), a modified base found in the D-loop of most tRNAs, via the reduction of the C5-C6 double bond in target uridines. Specifically modifies U20 and U20a in tRNAs. The polypeptide is tRNA-dihydrouridine(20/20a) synthase (Shewanella oneidensis (strain ATCC 700550 / JCM 31522 / CIP 106686 / LMG 19005 / NCIMB 14063 / MR-1)).